Consider the following 118-residue polypeptide: NADH-quinone oxidoreductase subunit A (118 aa).

3 helical membrane passes run 6 to 26, 64 to 84, and 87 to 107; these read LPVL…LLMG, AILF…AVVF, and IGMT…VGFI.

This sequence belongs to the complex I subunit 3 family. NDH-1 is composed of 14 different subunits. Subunits NuoA, H, J, K, L, M, N constitute the membrane sector of the complex.

It is found in the cell inner membrane. The enzyme catalyses a quinone + NADH + 5 H(+)(in) = a quinol + NAD(+) + 4 H(+)(out). In terms of biological role, NDH-1 shuttles electrons from NADH, via FMN and iron-sulfur (Fe-S) centers, to quinones in the respiratory chain. The immediate electron acceptor for the enzyme in this species is believed to be ubiquinone. Couples the redox reaction to proton translocation (for every two electrons transferred, four hydrogen ions are translocated across the cytoplasmic membrane), and thus conserves the redox energy in a proton gradient. In Acidithiobacillus ferrooxidans (strain ATCC 53993 / BNL-5-31) (Leptospirillum ferrooxidans (ATCC 53993)), this protein is NADH-quinone oxidoreductase subunit A.